The sequence spans 72 residues: Translation initiation factor IF-1 (72 aa).

The S1-like domain occupies 1-72; the sequence is MSKEDMIEFS…TKGRITFRFK (72 aa).

Belongs to the IF-1 family. In terms of assembly, component of the 30S ribosomal translation pre-initiation complex which assembles on the 30S ribosome in the order IF-2 and IF-3, IF-1 and N-formylmethionyl-tRNA(fMet); mRNA recruitment can occur at any time during PIC assembly.

It localises to the cytoplasm. In terms of biological role, one of the essential components for the initiation of protein synthesis. Stabilizes the binding of IF-2 and IF-3 on the 30S subunit to which N-formylmethionyl-tRNA(fMet) subsequently binds. Helps modulate mRNA selection, yielding the 30S pre-initiation complex (PIC). Upon addition of the 50S ribosomal subunit IF-1, IF-2 and IF-3 are released leaving the mature 70S translation initiation complex. The sequence is that of Translation initiation factor IF-1 from Granulibacter bethesdensis (strain ATCC BAA-1260 / CGDNIH1).